A 626-amino-acid chain; its full sequence is DNA mismatch repair protein MutL (626 aa).

The protein belongs to the DNA mismatch repair MutL/HexB family.

Its function is as follows. This protein is involved in the repair of mismatches in DNA. It is required for dam-dependent methyl-directed DNA mismatch repair. May act as a 'molecular matchmaker', a protein that promotes the formation of a stable complex between two or more DNA-binding proteins in an ATP-dependent manner without itself being part of a final effector complex. This Pelodictyon phaeoclathratiforme (strain DSM 5477 / BU-1) protein is DNA mismatch repair protein MutL.